The primary structure comprises 212 residues: Golgi-associated RAB2 interactor protein 5A (212 aa).

Disordered stretches follow at residues 1–21 (MKGGRDLKAARGGADRPLAPA) and 162–212 (PFTH…LWGL). The segment covering 169–185 (APEEEEEEEEEEEEEEV) has biased composition (acidic residues).

This sequence belongs to the GARIN family. In terms of assembly, interacts (via N-terminus) with RAB2B (in GTP-bound form). As to expression, expressed in testis (at protein level).

Its subcellular location is the golgi apparatus. In terms of biological role, RAB2B effector protein which promotes cytosolic DNA-induced innate immune responses. Regulates IFN responses against DNA viruses by regulating the CGAS-STING signaling axis. In Mus musculus (Mouse), this protein is Golgi-associated RAB2 interactor protein 5A.